The chain runs to 191 residues: ATP synthase subunit b 1 (191 aa).

The helical transmembrane segment at 7–25 (RMRILCLCATTLLMAGSAL) threads the bilayer.

It belongs to the ATPase B chain family. In terms of assembly, F-type ATPases have 2 components, F(1) - the catalytic core - and F(0) - the membrane proton channel. F(1) has five subunits: alpha(3), beta(3), gamma(1), delta(1), epsilon(1). F(0) has three main subunits: a(1), b(2) and c(10-14). The alpha and beta chains form an alternating ring which encloses part of the gamma chain. F(1) is attached to F(0) by a central stalk formed by the gamma and epsilon chains, while a peripheral stalk is formed by the delta and b chains.

Its subcellular location is the cell inner membrane. Functionally, f(1)F(0) ATP synthase produces ATP from ADP in the presence of a proton or sodium gradient. F-type ATPases consist of two structural domains, F(1) containing the extramembraneous catalytic core and F(0) containing the membrane proton channel, linked together by a central stalk and a peripheral stalk. During catalysis, ATP synthesis in the catalytic domain of F(1) is coupled via a rotary mechanism of the central stalk subunits to proton translocation. Its function is as follows. Component of the F(0) channel, it forms part of the peripheral stalk, linking F(1) to F(0). This Syntrophotalea carbinolica (strain DSM 2380 / NBRC 103641 / GraBd1) (Pelobacter carbinolicus) protein is ATP synthase subunit b 1.